Here is a 224-residue protein sequence, read N- to C-terminus: Flagellar L-ring protein (224 aa).

Positions Met1–Gly15 are cleaved as a signal peptide. Cys16 carries N-palmitoyl cysteine lipidation. Residue Cys16 is the site of S-diacylglycerol cysteine attachment.

The protein belongs to the FlgH family. In terms of assembly, the basal body constitutes a major portion of the flagellar organelle and consists of four rings (L,P,S, and M) mounted on a central rod.

It localises to the cell outer membrane. It is found in the bacterial flagellum basal body. Functionally, assembles around the rod to form the L-ring and probably protects the motor/basal body from shearing forces during rotation. This Shewanella frigidimarina (strain NCIMB 400) protein is Flagellar L-ring protein.